A 566-amino-acid chain; its full sequence is 4-hydroxy-7-methoxy-3-oxo-3,4-dihydro-2H-1,4-benzoxazin-2-yl glucoside beta-D-glucosidase 1, chloroplastic (566 aa).

A chloroplast-targeting transit peptide spans 1–54; that stretch reads MAPLLAAAMNHAAAHPGLRSHLVGPNNESFSRHHLPSSSPQSSKRRCNLSFTTR. The segment at 17–47 is disordered; it reads GLRSHLVGPNNESFSRHHLPSSSPQSSKRRC. Residues Gln-92, His-196, and 244-245 each bind a beta-D-glucoside; that span reads NE. Residue Glu-245 is the Proton donor of the active site. The cysteines at positions 264 and 270 are disulfide-linked. Positions 325–361 are dimerization; that stretch reads SFLDKQAEERSWDINLGWFLEPVVRGDYPFSMRSLAR. An a beta-D-glucoside-binding site is contributed by Tyr-387. Dimerization regions lie at residues 394–405 and 450–453; these read NIDISPNYSPVL and KYGN. A beta-D-glucoside contacts are provided by residues Glu-460, Trp-511, 518–519, and Tyr-527; that span reads EW. Catalysis depends on Glu-460, which acts as the Nucleophile.

The protein belongs to the glycosyl hydrolase 1 family. As to quaternary structure, homo- and heterodimer. As to expression, expressed in all seedling parts. Most abundant in the coleoptile.

The protein resides in the plastid. The protein localises to the chloroplast. It carries out the reaction Hydrolysis of terminal, non-reducing beta-D-glucosyl residues with release of beta-D-glucose.. The enzyme catalyses DIMBOA beta-D-glucoside + H2O = DIMBOA + D-glucose. It catalyses the reaction DIBOA beta-D-glucoside + H2O = DIBOA + D-glucose. Reversibly inhibited by micromolar concentrations of Hg(2+) or Ag(+), but irreversibly inhibited by alkylation in presence of urea. Competitive inhibition by p-nitrophenyl beta-D-thioglucoside (pNPTGlc), glucotetrazole, and para-hydroxy-S-mandelonitrile beta-glucoside (dhurrin). Its function is as follows. Is implicated in many functions such as ABA metabolism, hydrolysis of conjugated gibberellins, conversion of storage forms of cytokinins to active forms. Also acts in defense of young plant parts against pests via the production of hydroxamic acids from hydroxamic acid glucosides. Enzymatic activity is highly correlated with plant growth. The preferred substrate is DIMBOA-beta-D-glucoside. Hydrolyzes the chromogenic substrate 6-bromo-2-naphthyl-beta-D-glucoside (6BNGlc) and various artificial aryl beta-glucosides. No activity with cellobiose, arbutin, gentiobiose, linamarin or dhurrin as substrates. This chain is 4-hydroxy-7-methoxy-3-oxo-3,4-dihydro-2H-1,4-benzoxazin-2-yl glucoside beta-D-glucosidase 1, chloroplastic (GLU1), found in Zea mays (Maize).